The sequence spans 431 residues: Adenylosuccinate synthetase (431 aa).

GTP is bound by residues 12-18 (GDEGKGK) and 40-42 (GHT). Catalysis depends on Asp-13, which acts as the Proton acceptor. Residues Asp-13 and Gly-40 each coordinate Mg(2+). Residues 13-16 (DEGK), 38-41 (NAGH), Thr-130, Arg-144, Gln-225, Thr-240, and Arg-304 contribute to the IMP site. The active-site Proton donor is His-41. 300–306 (ATTGRPR) is a binding site for substrate. GTP is bound by residues Arg-306, 332-334 (KLD), and 414-416 (SVG).

The protein belongs to the adenylosuccinate synthetase family. In terms of assembly, homodimer. It depends on Mg(2+) as a cofactor.

The protein resides in the cytoplasm. It catalyses the reaction IMP + L-aspartate + GTP = N(6)-(1,2-dicarboxyethyl)-AMP + GDP + phosphate + 2 H(+). The protein operates within purine metabolism; AMP biosynthesis via de novo pathway; AMP from IMP: step 1/2. Its function is as follows. Plays an important role in the de novo pathway of purine nucleotide biosynthesis. Catalyzes the first committed step in the biosynthesis of AMP from IMP. The sequence is that of Adenylosuccinate synthetase from Anaeromyxobacter sp. (strain Fw109-5).